Consider the following 52-residue polypeptide: METTSFGFAASLLFVGVPTIFLIGLFVSTSDGEKSSFYSDTSKGRLSPEPKK.

The chain crosses the membrane as a helical span at residues 6-26 (FGFAASLLFVGVPTIFLIGLF). The tract at residues 31-52 (DGEKSSFYSDTSKGRLSPEPKK) is disordered. Over residues 42-52 (SKGRLSPEPKK) the composition is skewed to basic and acidic residues.

It belongs to the PsbM family. PSII is composed of 1 copy each of membrane proteins PsbA, PsbB, PsbC, PsbD, PsbE, PsbF, PsbH, PsbI, PsbJ, PsbK, PsbL, PsbM, PsbT, PsbX, PsbY, Psb30/Ycf12, peripheral proteins PsbO, CyanoQ (PsbQ), PsbU, PsbV and a large number of cofactors. It forms dimeric complexes.

The protein localises to the cellular thylakoid membrane. One of the components of the core complex of photosystem II (PSII). PSII is a light-driven water:plastoquinone oxidoreductase that uses light energy to abstract electrons from H(2)O, generating O(2) and a proton gradient subsequently used for ATP formation. It consists of a core antenna complex that captures photons, and an electron transfer chain that converts photonic excitation into a charge separation. This subunit is found at the monomer-monomer interface. The protein is Photosystem II reaction center protein M of Prochlorococcus marinus (strain NATL1A).